Reading from the N-terminus, the 747-residue chain is MEVKRLKVTELRSELQRRGLDSRGLKVDLAQRLQEALDAEMLEDEAGGGGAGPGGACKAEPRPVAASGGGPGGDEEEDEEEEEEDEEALLEDEDEEPPPAQALGQAAQPPPEPPEAAAMEAAAEPDASEKPAEATAGSGGVNGGEEQGLGKREEDEPEERSGDETPGSEVPGDKAAEEQGDDQDSEKSKPAGSDGERRGVKRQRDEKDEHGRAYYEFREEAYHSRSKSPLPPEEEAKDEEEDQTLVNLDTYTSDLHFQVSKDRYGGQPLFSEKFPTLWSGARSTYGVTKGKVCFEAKVTQNLPMKEGCTEVSLLRVGWSVDFSRPQLGEDEFSYGFDGRGLKAENGQFEEFGQTFGENDVIGCFANFETEEVELSFSKNGEDLGVAFWISKDSLADRALLPHVLCKNCVVELNFGQKEEPFFPPPEEFVFIHAVPVEERVRTAVPPKTIEECEVILMVGLPGSGKTQWALKYAKENPEKRYNVLGAETVLNQMRMKGLEEPEMDPKSRDLLVQQASQCLSKLVQIASRTKRNFILDQCNVYNSGQRRKLLLFKTFSRKVVVVVPNEEDWKKRLELRKEVEGDDVPESIMLEMKANFSLPEKCDYMDEVTYGELEKEEAQPIVTKYKEEARKLLPPSEKRTNRRNNRNKRNRQNRSRGQGYVGGQRRGYDNRAYGQQYWGQPGNRGGYRNFYDRYRGDYDRFYGRDYEYNRYRDYYRQYNRDWQSYYYHHPQDRDRYYRNYYGYQGYR.

Positions 3 to 37 constitute an SAP domain; the sequence is VKRLKVTELRSELQRRGLDSRGLKVDLAQRLQEAL. 2 disordered regions span residues 40-242 and 627-666; these read EMLE…EEED and EEAR…GQRR. Positions 73–97 are enriched in acidic residues; the sequence is GDEEEDEEEEEEDEEALLEDEDEEP. Over residues 115-125 the composition is skewed to low complexity; sequence EAAAMEAAAEP. A compositionally biased stretch (gly residues) spans 137–147; the sequence is GSGGVNGGEEQ. Positions 148–163 are enriched in basic and acidic residues; sequence GLGKREEDEPEERSGD. Ser-161 is modified (phosphoserine). Thr-165 is subject to Phosphothreonine. Phosphoserine is present on residues Ser-168, Ser-185, Ser-188, Ser-226, and Ser-228. Residues 185-223 show a composition bias toward basic and acidic residues; that stretch reads SEKSKPAGSDGERRGVKRQRDEKDEHGRAYYEFREEAYH. Positions 226–419 constitute a B30.2/SPRY domain; it reads SKSPLPPEEE…VELNFGQKEE (194 aa). A compositionally biased stretch (acidic residues) spans 232-242; that stretch reads PEEEAKDEEED. Positions 627–639 are enriched in basic and acidic residues; that stretch reads EEARKLLPPSEKR. Residues 640-654 show a composition bias toward basic residues; that stretch reads TNRRNNRNKRNRQNR. Arg-656, Arg-684, Arg-738, and Arg-747 each carry omega-N-methylarginine.

Binds to MLF1 and retains it in the nucleus.

It is found in the nucleus. This Homo sapiens (Human) protein is Heterogeneous nuclear ribonucleoprotein U-like protein 2 (HNRNPUL2).